Consider the following 407-residue polypeptide: Aminoacylase-1 (407 aa).

A2 carries the post-translational modification N-acetylalanine. H80 provides a ligand contact to Zn(2+). The active site involves D82. Zn(2+) is bound at residue D113. Residue E147 is the Proton acceptor of the active site. Zn(2+) is bound by residues E148, E175, and H372.

The protein belongs to the peptidase M20A family. As to quaternary structure, homodimer. Interacts with SPHK1. Zn(2+) is required as a cofactor.

It localises to the cytoplasm. It carries out the reaction an N-acyl-L-amino acid + H2O = an L-alpha-amino acid + a carboxylate. The catalysed reaction is N-acetyl-L-methionine + H2O = L-methionine + acetate. It catalyses the reaction N-acetyl-L-glutamine + H2O = L-glutamine + acetate. Functionally, catalyzes the hydrolysis of N-acetylated amino acids to acetate and free amino acids. This chain is Aminoacylase-1 (ACY1), found in Sus scrofa (Pig).